The chain runs to 431 residues: Arginine biosynthesis bifunctional protein ArgJ, mitochondrial (431 aa).

Residues Thr-174, Lys-200, Thr-211, Glu-297, Asn-426, and Thr-431 each coordinate substrate. The active-site Nucleophile is the Thr-211.

This sequence belongs to the ArgJ family. In terms of assembly, heterodimer of an alpha and a beta chain. The alpha and beta chains are autoproteolytically processed from a single precursor protein within the mitochondrion.

The protein resides in the mitochondrion matrix. The enzyme catalyses N(2)-acetyl-L-ornithine + L-glutamate = N-acetyl-L-glutamate + L-ornithine. The catalysed reaction is L-glutamate + acetyl-CoA = N-acetyl-L-glutamate + CoA + H(+). The protein operates within amino-acid biosynthesis; L-arginine biosynthesis; L-ornithine and N-acetyl-L-glutamate from L-glutamate and N(2)-acetyl-L-ornithine (cyclic): step 1/1. It functions in the pathway amino-acid biosynthesis; L-arginine biosynthesis; N(2)-acetyl-L-ornithine from L-glutamate: step 1/4. Functionally, catalyzes two activities which are involved in the cyclic version of arginine biosynthesis: the synthesis of acetylglutamate from glutamate and acetyl-CoA, and of ornithine by transacetylation between acetylornithine and glutamate. This is Arginine biosynthesis bifunctional protein ArgJ, mitochondrial from Yarrowia lipolytica (strain CLIB 122 / E 150) (Yeast).